The sequence spans 3027 residues: MNLHQVLTGAVNPGDHCFSVGSIGDQRFTAYASGCDIVILGSDFERLQIIPGAKHGNIQVGCVDCSMQQGKIAASYGNVISIFEPVNLPKQKKNLELYSQWQKSGQFFLESIAHNITWDPTGSRLLTGSSYLQLWSNTNLEKPTEDENLNKTDLNFGDWKCIWHCKTASQVHLMKFSPDGEFFATAGKDDCLLKVWYNVENWRTAVTSPDGSSEKQSQGEIDFSFVYLAHPRAVNGFSWRKTSKYMPRASVCNVLLTCCKDNVCRLWVETFLPNDCLLYGGDCSHWTESINLTNNFKRNASSKERVQNALEVNLRHFRRGRRRSLALVAHTGYLPHQQDPHHVHRNTPLHANALCHFHIAASINPATDIPLLPSITSLSLNENEEKTGPFVVHWLNNKELHFTLSMEVFLQQLRKSFEQPSSEASVEDSNQADVKSDEETDDGVDDLKINPEKKELGCDKMVPNSSFTSLSSAAIDHQIEVLLSEWSKNADMLFSIHPMDGSLLVWHVDWLDEYQPGMFRQVQVSFVSRIPVAFPTGDANSLCKSIMMYACTKNVDLAIQQGKQKPSGLTRSTSMLISSGHNKSSNSLKLSIFTPNVMMISKHADGSLNQWLVSFAEESAFSTVLSISHKSRYCGHRFHLNDLACHSVLPLLLTTSHHNALRTPDVDNPEQPFDALNIEECSLTQQNKSTVDVAFQDPSAVYSELILWRVDPVGPLSFSGGVSELARINSLHVSAFSNVAWLPTLIPSYCLGAYCNSPSACFVASDGQYLRLYEAVIDAKKLLSELSNPEISKYVGEVFNIVSQQSTARPGCIIALDPITKLHGRKTQLLHVFEEDFILNNLEKKSLGKDSILSNAGSSPNGFSEKFYLIVIECTQDNRSLLHMWNLHLKSIPVSLDEKVDTKLSEAVWQPEEHYSSSPEKILSPFSQKYQACRANLQSTSRLTLFSEMVYSQELHLPEGVEIISIKPSAGHLSSSSIYPACSAPYLLATSCSDEKVRFWRCRVTDGESATSKNGKIDLAYIWEEWPLLIEDGLQSNSSITVPGRPVEVSCAHTNRLAVAYKQPASNSRSSQDFVMHVSIFECESTGGSCWVLEQTIHLDELSTVLDSGISVDSNLVAYNKQDMYLSSKENITSNTKHLVHLDWMSREDGSHILTVGIGSKLFMYGPLAGKVQDQTGKETLAFPLWESTKVVPLSKFVLLRSVDLVSSVDGSPPFPVSLSWVRDGILVVGMDCEMHVYCQWQPSSKQEPVITDSYSGSTPSITSLIKQSNSSSGLHPPKKTLTRSMTSLAQKICGKKTAFDPSVDMEDSGLFEAAHVLSPTLPQYHPLQLLELMDLGKVRRAKAILSHLVKCIAGEVVALNEAESNHERRLRSLTISASGSTTRDPQAFNKAENTDYTEIDSVPPLPLYALLAADDDSCYSSLEKSSNESTLSKSNQLSKESYDELFQTQLLMTDTHMLETDEENTKPRVIDLSQYSPTYFGPEHAQVLSGHLLHSSLPGLSRMEQMSLMALADTIATTSTDIGESRDRSQGGETLDECGLKFLLAVRLHTFLTTSLPAYRAQLLHQGLSTSHFAWAFHSVAEEELLNMLPAMQKDDPTWSELRAMGVGWWVRNTRILRKCIEKVAKAAFYRKNDPLDAAIFYLAMKKKAVIWGLYRAEKNTRMTQFFGHNFEDERWRKAALKNAFSLLGKQRFEHSAAFFLLAGCLRDAIEVCLEKLNDIQLALVIARLYESEFDTSAAYKSILRKKVLGIDSPVSELCSLNINMHHDPFLRSMAYWILEDYSGALETLIKQPIRENDDQVLSASNPTVFNFYNYLRTHPLLLRRHFGSSDTFSTHMSLTGKSGLAGTINLSERRLFFTTASAHLKAGCPMLALEVLSKMPKVIKKTRPFYRASSFLDTSKDCSPSSPLKLDAREDKSSAVDWSQSLINGFGSSSEGSSEKQSNSTLSFDWSQPSVVFQDDSLELKWDSDNDEENEDVPISMKELKPLQRKTDKKLDDISSNYTESFSTLDENDLLNPSEDIIAVQLKFRACLKILTVELRTLSTGYEIDGGKLRYQLYHWLEKEVIALQRTCDFCSDAEELQSAFGRNEDEFGLNEDAEDLPHQTKVKQLRENFQEKRQWLLKYQSLLRMFLSYCILHGSHGGGLASVRMELILLLQESQQETSEPLFSSPLSEQTSVPLLFACTANAKTVVANPLLHLSNLTHDILHAIINFDSPPHPDIQSNKVYVMHTLAASLSACIYQCLCGSHNYSSFQTNQFTGMVYQTVLLPHRPSLKTGSLDEALTPNTSPAQWPGITCLIRLLNSSGEEAQSGLTVLLCEILTAVYLSLFIHGLATHSSNELFRIVAHPLNEKMWSAVFGGGAHVPSKEQTHSKTLPVSSLVEEGEKQNKRFRPSKMSCRESAPLTPSSAPVSQESLAVKEKFIPPELSIWDYFIAKPFLPSSQSRAEYDSEESLGSDDDDNDDDDDVLASDFHLQEHSNSNSYSWSLMRLAMVQLVLNNLKTFYPFAGHDLAELPVSSPLCHAVLKTLQCWEQVLLRRLEIHGGPPQNYIASHTAEESLSAGPAILRHKALLEPTNTPFKSKHHLALSVKRLWQYLVKQEEIQETFIKNIFTKKRCLNEIEADLGYPGGKARIIHKESDIITAFAVNKANRNCIAIASSHDVQELDVSGILATQVYTWVDDDIEVETKGSEDFLVIHARDDLTAVQGTTPYTHSNPGTPINMPWLGSTQTGRGASVMIKKAINNVRRMTSHPTLPYYLTGAQDGSVRMFEWGHSQQITCFRSGGNSRVTRMRFNYQGNKFGIVDADGYLSLYQTNWKCCPVTGSMPKPYLTWQCHNKTANDFVFVSSSSLIATAGLSTDNRNVCLWDTLVAPANSLVHAFTCHDSGATVLAYAPKHQLLISGGRKGFTYVFDLCQRQQRQLFQSHDSPVKAVAVDPTEEYFVTGSAEGNIKIWSLSTFGLLHTFVSEHARQSIFRNIGTGVMQIETGPANHIFSCGADGTMKMRILPDQFSPLNEVLKNDVKFML.

WD repeat units lie at residues 108–145 (FLES…KPTE), 166–206 (KTAS…RTAV), and 229–277 (AHPR…NDCL). S324, S422, S425, and S436 each carry phosphoserine. Residues 420 to 433 (PSSEASVEDSNQAD) show a composition bias toward polar residues. The disordered stretch occupies residues 420–450 (PSSEASVEDSNQADVKSDEETDDGVDDLKIN). The stretch at 476–516 (DHQIEVLLSEWSKNADMLFSIHPMDGSLLVWHVDWLDEYQP) is one WD 4 repeat. The segment at 563–584 (KQKPSGLTRSTSMLISSGHNKS) is disordered. Phosphoserine is present on S574. WD repeat units follow at residues 580–621 (GHNK…ESAF), 628–665 (SHKS…RTPD), and 848–895 (GKDS…IPVS). Phosphoserine is present on residues S918 and S924. WD repeat units lie at residues 968–1010 (PSAG…GESA), 1134–1175 (SNTK…VQDQ), and 1211–1251 (GSPP…EPVI). Phosphoserine is present on residues S1830, S1896, S1908, and S1970. 2 disordered regions span residues 2367-2412 (PSKE…SSAP) and 2446-2468 (SRAE…DDDD). Residues 2451-2468 (DSEESLGSDDDDNDDDDD) show a composition bias toward acidic residues. WD repeat units follow at residues 2742–2783 (KAIN…TCFR), 2785–2824 (GGNS…CPVT), 2836–2878 (CHNK…ANSL), 2884–2923 (CHDS…QRQL), 2926–2965 (SHDS…LLHT), and 2978–3016 (NIGT…SPLN).

Expressed in bone, breast, eye, foreskin, heart, parathyroid, small intestine, testis, tonsils, placenta and uterus.

This chain is DmX-like protein 1 (DMXL1), found in Homo sapiens (Human).